We begin with the raw amino-acid sequence, 189 residues long: Large ribosomal subunit protein bL9 (189 aa).

Belongs to the bacterial ribosomal protein bL9 family.

Its function is as follows. Binds to the 23S rRNA. This Methylobacterium nodulans (strain LMG 21967 / CNCM I-2342 / ORS 2060) protein is Large ribosomal subunit protein bL9.